We begin with the raw amino-acid sequence, 101 residues long: Small ribosomal subunit protein uS14 (101 aa).

Belongs to the universal ribosomal protein uS14 family. Part of the 30S ribosomal subunit. Contacts proteins S3 and S10.

Binds 16S rRNA, required for the assembly of 30S particles and may also be responsible for determining the conformation of the 16S rRNA at the A site. The protein is Small ribosomal subunit protein uS14 of Chlamydia muridarum (strain MoPn / Nigg).